The following is a 264-amino-acid chain: S-adenosylmethionine decarboxylase proenzyme (264 aa).

The active-site Schiff-base intermediate with substrate; via pyruvic acid is the serine 112. Residue serine 112 is modified to Pyruvic acid (Ser); by autocatalysis. Histidine 117 acts as the Proton acceptor; for processing activity in catalysis. Catalysis depends on cysteine 140, which acts as the Proton donor; for catalytic activity.

This sequence belongs to the prokaryotic AdoMetDC family. Type 2 subfamily. As to quaternary structure, heterooctamer of four alpha and four beta chains arranged as a tetramer of alpha/beta heterodimers. Requires pyruvate as cofactor. In terms of processing, is synthesized initially as an inactive proenzyme. Formation of the active enzyme involves a self-maturation process in which the active site pyruvoyl group is generated from an internal serine residue via an autocatalytic post-translational modification. Two non-identical subunits are generated from the proenzyme in this reaction, and the pyruvate is formed at the N-terminus of the alpha chain, which is derived from the carboxyl end of the proenzyme. The post-translation cleavage follows an unusual pathway, termed non-hydrolytic serinolysis, in which the side chain hydroxyl group of the serine supplies its oxygen atom to form the C-terminus of the beta chain, while the remainder of the serine residue undergoes an oxidative deamination to produce ammonia and the pyruvoyl group blocking the N-terminus of the alpha chain.

The catalysed reaction is S-adenosyl-L-methionine + H(+) = S-adenosyl 3-(methylsulfanyl)propylamine + CO2. It functions in the pathway amine and polyamine biosynthesis; S-adenosylmethioninamine biosynthesis; S-adenosylmethioninamine from S-adenosyl-L-methionine: step 1/1. Its function is as follows. Catalyzes the decarboxylation of S-adenosylmethionine to S-adenosylmethioninamine (dcAdoMet), the propylamine donor required for the synthesis of the polyamines spermine and spermidine from the diamine putrescine. In Salmonella gallinarum (strain 287/91 / NCTC 13346), this protein is S-adenosylmethionine decarboxylase proenzyme.